The sequence spans 334 residues: Formamidase (334 aa).

One can recognise a CN hydrolase domain in the interval 14 to 260; sequence FLVAAIQFPV…WEIVTGEIYP (247 aa). Glu60 functions as the Proton acceptor in the catalytic mechanism. Catalysis depends on Lys133, which acts as the Proton donor. The active-site Nucleophile is the Cys166.

It belongs to the carbon-nitrogen hydrolase superfamily. Aliphatic amidase family. As to quaternary structure, homotetramer.

The enzyme catalyses formamide + H2O = formate + NH4(+). Its activity is regulated as follows. Inhibited by iodoacetate. Appears to be regulated by the fur protein, but this effect is not mediated at the transcriptional level. Functionally, is an aliphatic amidase with a restricted substrate specificity, as it only hydrolyzes formamide. Probably involved in the nitrogen metabolism of H.pylori. The chain is Formamidase (amiF) from Helicobacter pylori (strain ATCC 700392 / 26695) (Campylobacter pylori).